A 601-amino-acid chain; its full sequence is A-type ATP synthase subunit A (601 aa).

Residue 236–243 coordinates ATP; it reads GPFGSGKT.

This sequence belongs to the ATPase alpha/beta chains family. In terms of assembly, has multiple subunits with at least A(3), B(3), C, D, E, F, H, I and proteolipid K(x).

It localises to the cell membrane. The enzyme catalyses ATP + H2O + 4 H(+)(in) = ADP + phosphate + 5 H(+)(out). Functionally, component of the A-type ATP synthase that produces ATP from ADP in the presence of a proton gradient across the membrane. The A chain is the catalytic subunit. The chain is A-type ATP synthase subunit A from Hyperthermus butylicus (strain DSM 5456 / JCM 9403 / PLM1-5).